The primary structure comprises 227 residues: DnaJ homolog subfamily B member 8 (227 aa).

Residues 3–69 (NYYEVLGVQS…KKRSVYDRAG (67 aa)) form the J domain.

Interacts with histone deacetylases HDAC4, HDAC6, and SIRT2, HDAC activity is required for antiaggregation.

Efficient suppressor of aggregation and toxicity of disease-associated polyglutamine proteins. This chain is DnaJ homolog subfamily B member 8 (Dnajb8), found in Mus musculus (Mouse).